A 505-amino-acid chain; its full sequence is Kinesin light chain 3 (505 aa).

A disordered region spans residues 1 to 20 (MSVQVAAPGGLGLGLERPSP). The stretch at 88–150 (LLALSAHVGA…EEEKSHLEFL (63 aa)) forms a coiled coil. The segment at 157-193 (DPPAESQQPESPPRRDSLASLFPSEEEERRGPEAVGA) is disordered. At S173 the chain carries Phosphoserine. TPR repeat units lie at residues 207 to 240 (LRTLHNLVIQYAGQGRYEVAVPLCRQALEDLERS), 249 to 282 (ATMLNILALVYRDQNKYKEATDLLHDALQIREQT), 291 to 324 (AATLNNLAVLYGKRGRYREAEPLCQRALEIREKV), 333 to 366 (AKQLNNLALLCQNQGKFEEVERHYARALSIYEAL), and 375 to 408 (AKTKNNLASAYLKQNKYQQAEELYKEILHREALP). A disordered region spans residues 409-505 (APLGAPNTGT…STSTQDLGPR (97 aa)). Low complexity predominate over residues 416–434 (TGTTSDTQQQTLSRSSSFS). Over residues 435-453 (KLRESIRRGSEKLVSRLRG) the composition is skewed to basic and acidic residues. Residue S467 is modified to Phosphoserine. The span at 489 to 505 (SEASRTLSTSTQDLGPR) shows a compositional bias: polar residues. A Phosphothreonine modification is found at T499.

Belongs to the kinesin light chain family. In terms of assembly, oligomer composed of two heavy chains and two light chains. Associates with microtubulin in an ATP-dependent manner. Interacts with KIF5C. Interacts with ODF1. Interacts with LRGUK. Interacts with VDAC2.

The protein resides in the cytoplasm. Its subcellular location is the cytoskeleton. It localises to the mitochondrion. In terms of biological role, kinesin is a microtubule-associated force-producing protein that may play a role in organelle transport. Plays a role during spermiogenesis in the development of the sperm tail midpiece and in the normal function of spermatozoa. May play a role in the formation of the mitochondrial sheath formation in the developing spermatid midpiece. This chain is Kinesin light chain 3 (KLC3), found in Bos taurus (Bovine).